A 1178-amino-acid chain; its full sequence is Pyruvate carboxylase, mitochondrial (1178 aa).

A mitochondrion-targeting transit peptide spans 1 to 20 (MLKFQTVRGGLRLLGVRRSS). An N6-acetyllysine mark is found at Lys-35 and Lys-39. The Biotin carboxylation domain occupies 36 to 486 (PIKKVMVANR…DTQFIDENPE (451 aa)). Lys-79 bears the N6-acetyllysine; alternate mark. Lys-79 is subject to N6-succinyllysine; alternate. Residues Lys-148 and Lys-152 each carry the N6-acetyllysine modification. ATP contacts are provided by Lys-152 and Glu-236. One can recognise an ATP-grasp domain in the interval 156 to 353 (RAIAIAAGVP…LVHAQIHVSE (198 aa)). The residue at position 241 (Lys-241) is an N6-acetyllysine. ATP is bound at residue His-271. Lys-297, Lys-316, and Lys-319 each carry N6-acetyllysine. The active site involves Arg-328. Lys-434 is subject to N6-acetyllysine. Residue Lys-442 is modified to N6-succinyllysine. A Pyruvate carboxyltransferase domain is found at 563–832 (LLLMDTTFRD…DTEVPLERVF (270 aa)). 571 to 575 (RDAHQ) serves as a coordination point for substrate. Position 572 (Asp-572) interacts with Mn(2+). Lys-589 carries the N6-acetyllysine modification. Arg-644 contacts substrate. 2 positions are modified to N6-acetyllysine: Lys-661 and Lys-717. Residue Lys-741 coordinates Mn(2+). Lys-741 is subject to N6-carboxylysine. Lys-748 is modified (N6-acetyllysine). Residues His-771 and His-773 each contribute to the Mn(2+) site. Residue Lys-892 is modified to N6-acetyllysine. Residue Thr-908 coordinates substrate. The residue at position 969 (Lys-969) is an N6-acetyllysine. Lys-988 carries the N6-acetyllysine; alternate modification. Lys-988 is modified (N6-succinyllysine; alternate). At Lys-992 the chain carries N6-acetyllysine. Thr-1003 bears the Phosphothreonine mark. N6-acetyllysine occurs at positions 1061, 1090, and 1124. Positions 1109–1178 (KGQIGAPMPG…EGDDLILEIE (70 aa)) constitute a Biotinyl-binding domain. An N6-biotinyllysine modification is found at Lys-1144.

As to quaternary structure, homotetramer. Interacts (via the biotin carboxylation domain) with SIRT4. Biotin is required as a cofactor. Mn(2+) serves as cofactor. Post-translationally, acetylation of Lys-748 might play a role in catalytic activity regulation.

The protein localises to the mitochondrion matrix. It catalyses the reaction hydrogencarbonate + pyruvate + ATP = oxaloacetate + ADP + phosphate + H(+). The protein operates within carbohydrate biosynthesis; gluconeogenesis. In terms of biological role, pyruvate carboxylase catalyzes a 2-step reaction, involving the ATP-dependent carboxylation of the covalently attached biotin in the first step and the transfer of the carboxyl group to pyruvate in the second. Catalyzes in a tissue specific manner, the initial reactions of glucose (liver, kidney) and lipid (adipose tissue, liver, brain) synthesis from pyruvate. In Rattus norvegicus (Rat), this protein is Pyruvate carboxylase, mitochondrial (Pc).